The following is a 507-amino-acid chain: ATP synthase subunit alpha, chloroplastic (507 aa).

Position 170–177 (170–177 (GDRQTGKT)) interacts with ATP.

The protein belongs to the ATPase alpha/beta chains family. F-type ATPases have 2 components, CF(1) - the catalytic core - and CF(0) - the membrane proton channel. CF(1) has five subunits: alpha(3), beta(3), gamma(1), delta(1), epsilon(1). CF(0) has four main subunits: a, b, b' and c.

It is found in the plastid. The protein localises to the chloroplast thylakoid membrane. It carries out the reaction ATP + H2O + 4 H(+)(in) = ADP + phosphate + 5 H(+)(out). Functionally, produces ATP from ADP in the presence of a proton gradient across the membrane. The alpha chain is a regulatory subunit. This Citrus sinensis (Sweet orange) protein is ATP synthase subunit alpha, chloroplastic.